The sequence spans 256 residues: Thiazole synthase (256 aa).

The Schiff-base intermediate with DXP role is filled by Lys95. 1-deoxy-D-xylulose 5-phosphate contacts are provided by residues Gly156, 182–183 (AG), and 204–205 (NT).

The protein belongs to the ThiG family. As to quaternary structure, homotetramer. Forms heterodimers with either ThiH or ThiS.

The protein resides in the cytoplasm. It catalyses the reaction [ThiS sulfur-carrier protein]-C-terminal-Gly-aminoethanethioate + 2-iminoacetate + 1-deoxy-D-xylulose 5-phosphate = [ThiS sulfur-carrier protein]-C-terminal Gly-Gly + 2-[(2R,5Z)-2-carboxy-4-methylthiazol-5(2H)-ylidene]ethyl phosphate + 2 H2O + H(+). It participates in cofactor biosynthesis; thiamine diphosphate biosynthesis. In terms of biological role, catalyzes the rearrangement of 1-deoxy-D-xylulose 5-phosphate (DXP) to produce the thiazole phosphate moiety of thiamine. Sulfur is provided by the thiocarboxylate moiety of the carrier protein ThiS. In vitro, sulfur can be provided by H(2)S. The sequence is that of Thiazole synthase from Salmonella arizonae (strain ATCC BAA-731 / CDC346-86 / RSK2980).